The primary structure comprises 320 residues: Myoblast determination protein 1 (320 aa).

A Peptide (Met-Gly) (interchain with G-Cter in ubiquitin) cross-link involves residue methionine 1. N6-methyllysine; by EHMT2 is present on lysine 104. Residues 109–160 (DRRKAATMRERRRLSKVNEAFETLKRCTSSNPNQRLPKVEILRNAIRYIEGL) enclose the bHLH domain. 2 disordered regions span residues 174 to 219 (AAAA…PPSG) and 262 to 320 (ESPA…YQVL). Composition is skewed to polar residues over residues 197–207 (SDASSPRSNCS) and 291–301 (GESSGDPTQSP).

In terms of assembly, efficient DNA binding requires dimerization with another bHLH protein. Seems to form active heterodimers with ITF-2. Interacts with SUV39H1. Interacts with DDX5. Interacts with CHD2. Interacts with TSC22D3. Interacts with SETD3. Interacts with P-TEFB complex; promotes the transcriptional activity of MYOD1 through its CDK9-mediated phosphorylation. Interacts with CSRP3. Interacts with NUPR1. In terms of processing, phosphorylated by CDK9. This phosphorylation promotes its function in muscle differentiation. Acetylated by a complex containing EP300 and PCAF. The acetylation is essential to activate target genes. Conversely, its deacetylation by SIRT1 inhibits its function. Post-translationally, ubiquitinated on the N-terminus; which is required for proteasomal degradation. In terms of processing, methylation at Lys-104 by EHMT2/G9a inhibits myogenic activity.

The protein localises to the nucleus. Functionally, acts as a transcriptional activator that promotes transcription of muscle-specific target genes and plays a role in muscle differentiation. Together with MYF5 and MYOG, co-occupies muscle-specific gene promoter core region during myogenesis. Induces fibroblasts to differentiate into myoblasts. Interacts with and is inhibited by the twist protein. This interaction probably involves the basic domains of both proteins. In Homo sapiens (Human), this protein is Myoblast determination protein 1 (MYOD1).